The primary structure comprises 471 residues: Casein kinase 1-like protein 9 (471 aa).

In terms of domain architecture, Protein kinase spans 9 to 278; the sequence is FKLGRKIGSG…LKRLFRDLFI (270 aa). ATP contacts are provided by residues 15-23 and K38; that span reads IGSGSFGEL. D128 serves as the catalytic Proton acceptor. The segment at 300–471 is disordered; it reads SSSGSSSRTR…RSLELLTLRK (172 aa). The segment covering 325–339 has biased composition (basic and acidic residues); it reads EKQERIAGKETRENR. Residues 385–430 are compositionally biased toward low complexity; sequence SSRYGSSSRRAIPSSSRPSSAGGPSDSRSSSRLVTSTGGVGTVSNR. A compositionally biased stretch (polar residues) spans 431 to 449; the sequence is ASTSQRIQAGNESRTSSFS. Residues 454 to 464 are compositionally biased toward basic and acidic residues; it reads NTREDPLRRSL.

This sequence belongs to the protein kinase superfamily. CK1 Ser/Thr protein kinase family. Casein kinase I subfamily. In terms of assembly, monomer. In terms of processing, autophosphorylated on serine, threonine and tyrosine residues. Expressed in leaves, stems and flowers.

It is found in the cytoplasm. It localises to the nucleus. It catalyses the reaction L-seryl-[protein] + ATP = O-phospho-L-seryl-[protein] + ADP + H(+). It carries out the reaction L-threonyl-[protein] + ATP = O-phospho-L-threonyl-[protein] + ADP + H(+). In terms of biological role, casein kinases are operationally defined by their preferential utilization of acidic proteins such as caseins as substrates. Can phosphorylate casein on serine and threonine residues, and poly(Glu,Tyr) in vitro. In Arabidopsis thaliana (Mouse-ear cress), this protein is Casein kinase 1-like protein 9.